The chain runs to 147 residues: Deoxyuridine 5'-triphosphate nucleotidohydrolase (147 aa).

Substrate-binding positions include 67-69 (RSG), Asn80, and 84-86 (LID).

It belongs to the dUTPase family. The cofactor is Mg(2+).

The catalysed reaction is dUTP + H2O = dUMP + diphosphate + H(+). Its pathway is pyrimidine metabolism; dUMP biosynthesis; dUMP from dCTP (dUTP route): step 2/2. Its function is as follows. This enzyme is involved in nucleotide metabolism: it produces dUMP, the immediate precursor of thymidine nucleotides and it decreases the intracellular concentration of dUTP so that uracil cannot be incorporated into DNA. The polypeptide is Deoxyuridine 5'-triphosphate nucleotidohydrolase (Dictyoglomus turgidum (strain DSM 6724 / Z-1310)).